An 883-amino-acid chain; its full sequence is MSKTHVYELAKKMGIENKELLTRLKSLGIEVKNHLSVLEEDEILKVTAPPAAPPKSGPQEEVRVTTTVIRRRRVAEAAPAETPVEAVAPPVESAPAPLEVEAVEEAVVQAPPVVEPPVARESEAAPAEEPVAAAVKPASEPPVVQKAPVAPAAPPVDDKPTANKARILGRVELPGITTPAPKPADRREATAPKKRIEERIMTPSPTDRPAPAGDDRRKAGTPPPPPRKGKEFVAPAEPERGAKKPGGGGAGKKKEAFKKTELLEKRERIFEPGPKTGKGKKRERDMVSLGRKTEITVPKAIKRIIKISESITVGELAKRMGVKATDLIRVLMKMGMMVTINHPLDVDTATLVASEFGYEIENVAIDVDEMLESVPDAPESLTKRPPVVTIMGHVDHGKTSLLDAIREANVIAGEAGGITQHIGAYDVELNGRKITFLDTPGHEAFTAMRARGAKVTDIVILVVAADDGVMPQTREAVNHSKAAGVPIIVAINKIDKPEAKPERVKQELMEFGLVSEEWGGETIFVEVSAKKRINLPELLEMVLLQADVMDLKANPDKDARGTIVEAKLDRGRGPVATVLVQEGTLKIGDYFVAGVNSGRVRAMQNDRGDKVNEAGPSMPVEVIGFTGVPDAGDVFISLVDEKRAKEIASHRQQKLRETELAKHSKMSLEQLYDKIQKGEVKDLNAIVKADVQGSVEAVSESLRKLSTDAVRLNVIHSSVGAITETDVNLASASNAIILGFNVRPEPKASAHAEKEGVDIRLYNIIYDAVEDIKKAMEGLLEPTLREKYLGRAEVREVFSVPKVGNVAGCYIQDGKMIRNAQVRLLRDNVVIYEGKMSSLRRFKDDVKEVATGYECGIGLENYNDIKVGDVIEDFEIEKIATTL.

The disordered stretch occupies residues Val-118–Glu-261. Positions Ala-124–Ala-150 are enriched in low complexity. 2 stretches are compositionally biased toward basic and acidic residues: residues Pro-183–Ile-200 and Lys-252–Glu-261. One can recognise a tr-type G domain in the interval Lys-383 to Lys-552. Residues Gly-392–Thr-399 form a G1 region. A GTP-binding site is contributed by Gly-392–Thr-399. The interval Gly-417–His-421 is G2. Residues Asp-438–Gly-441 form a G3 region. GTP contacts are provided by residues Asp-438 to His-442 and Asn-492 to Asp-495. Positions Asn-492 to Asp-495 are G4. A G5 region spans residues Ser-528–Lys-530.

The protein belongs to the TRAFAC class translation factor GTPase superfamily. Classic translation factor GTPase family. IF-2 subfamily.

The protein localises to the cytoplasm. Functionally, one of the essential components for the initiation of protein synthesis. Protects formylmethionyl-tRNA from spontaneous hydrolysis and promotes its binding to the 30S ribosomal subunits. Also involved in the hydrolysis of GTP during the formation of the 70S ribosomal complex. The sequence is that of Translation initiation factor IF-2 from Geobacter sulfurreducens (strain ATCC 51573 / DSM 12127 / PCA).